Here is a 343-residue protein sequence, read N- to C-terminus: Biotin synthase (343 aa).

The 228-residue stretch at 64–291 (NTVQLSTLLS…RAMVRLSAGR (228 aa)) folds into the Radical SAM core domain. [4Fe-4S] cluster is bound by residues Cys79, Cys83, and Cys86. Positions 123, 154, 214, and 286 each coordinate [2Fe-2S] cluster.

The protein belongs to the radical SAM superfamily. Biotin synthase family. As to quaternary structure, homodimer. [4Fe-4S] cluster is required as a cofactor. [2Fe-2S] cluster serves as cofactor.

The enzyme catalyses (4R,5S)-dethiobiotin + (sulfur carrier)-SH + 2 reduced [2Fe-2S]-[ferredoxin] + 2 S-adenosyl-L-methionine = (sulfur carrier)-H + biotin + 2 5'-deoxyadenosine + 2 L-methionine + 2 oxidized [2Fe-2S]-[ferredoxin]. It functions in the pathway cofactor biosynthesis; biotin biosynthesis; biotin from 7,8-diaminononanoate: step 2/2. Catalyzes the conversion of dethiobiotin (DTB) to biotin by the insertion of a sulfur atom into dethiobiotin via a radical-based mechanism. The protein is Biotin synthase of Cupriavidus necator (strain ATCC 17699 / DSM 428 / KCTC 22496 / NCIMB 10442 / H16 / Stanier 337) (Ralstonia eutropha).